The primary structure comprises 334 residues: Aspartate carbamoyltransferase catalytic subunit (334 aa).

2 residues coordinate carbamoyl phosphate: R71 and T72. K99 serves as a coordination point for L-aspartate. Carbamoyl phosphate is bound by residues R121, H151, and Q154. L-aspartate is bound by residues R184 and R239. 2 residues coordinate carbamoyl phosphate: G280 and P281.

This sequence belongs to the aspartate/ornithine carbamoyltransferase superfamily. ATCase family. Heterododecamer (2C3:3R2) of six catalytic PyrB chains organized as two trimers (C3), and six regulatory PyrI chains organized as three dimers (R2).

It carries out the reaction carbamoyl phosphate + L-aspartate = N-carbamoyl-L-aspartate + phosphate + H(+). The protein operates within pyrimidine metabolism; UMP biosynthesis via de novo pathway; (S)-dihydroorotate from bicarbonate: step 2/3. Functionally, catalyzes the condensation of carbamoyl phosphate and aspartate to form carbamoyl aspartate and inorganic phosphate, the committed step in the de novo pyrimidine nucleotide biosynthesis pathway. The protein is Aspartate carbamoyltransferase catalytic subunit of Pseudomonas fluorescens (strain ATCC BAA-477 / NRRL B-23932 / Pf-5).